Reading from the N-terminus, the 467-residue chain is 3-isopropylmalate dehydratase large subunit (467 aa).

[4Fe-4S] cluster is bound by residues C347, C408, and C411.

The protein belongs to the aconitase/IPM isomerase family. LeuC type 1 subfamily. Heterodimer of LeuC and LeuD. It depends on [4Fe-4S] cluster as a cofactor.

It catalyses the reaction (2R,3S)-3-isopropylmalate = (2S)-2-isopropylmalate. The protein operates within amino-acid biosynthesis; L-leucine biosynthesis; L-leucine from 3-methyl-2-oxobutanoate: step 2/4. Its function is as follows. Catalyzes the isomerization between 2-isopropylmalate and 3-isopropylmalate, via the formation of 2-isopropylmaleate. This is 3-isopropylmalate dehydratase large subunit from Bordetella bronchiseptica (strain ATCC BAA-588 / NCTC 13252 / RB50) (Alcaligenes bronchisepticus).